Consider the following 483-residue polypeptide: Sodium/pantothenate symporter (483 aa).

The Periplasmic segment spans residues 1-2 (MQ). Residues 3-23 (LEVILPLVAYLVVVFGISVYA) traverse the membrane as a helical segment. Residues 24–42 (MRKRSTGTFLNEYFLGSRS) lie on the Cytoplasmic side of the membrane. The chain crosses the membrane as a helical span at residues 43-63 (MGGIVLAMTLTATYISASSFI). At 64-73 (GGPGAAYKYG) the chain is on the periplasmic side. Residues 74–94 (LGWVLLAMIQLPAVWLSLGIL) traverse the membrane as a helical segment. At 95-123 (GKKFAILARRYNAVTLNDMLFARYQSRLL) the chain is on the cytoplasmic side. Residues 124–144 (VWLASLSLLVAFVGAMTVQFI) form a helical membrane-spanning segment. The Periplasmic portion of the chain corresponds to 145-157 (GGARLLETAAGIP). Residues 158–178 (YETGLLIFGISIALYTAFGGF) form a helical membrane-spanning segment. Over 179–189 (RASVLNDTMQG) the chain is Cytoplasmic. The helical transmembrane segment at 190 to 210 (LVMLIGTVVLLIGVVHAAGGL) threads the bilayer. At 211–232 (SNAVQTLQTIDPQLVTPQGADD) the chain is on the periplasmic side. The helical transmembrane segment at 233–253 (ILSPAFMTSFWVLVCFGVIGL) threads the bilayer. Residues 254–272 (PHTAVRCISYKDSKAVHRG) are Cytoplasmic-facing. A helical transmembrane segment spans residues 273-293 (IIIGTIVVAILMFGMHLAGAL). The Periplasmic segment spans residues 294 to 305 (GRAVIPDLTVPD). A helical transmembrane segment spans residues 306–326 (LVIPTLMVKVLPPFAAGIFLA). At 327 to 368 (APMAAIMSTINAQLLQSSATIIKDLYLNIRPDQMQNETRLKR) the chain is on the cytoplasmic side. The chain crosses the membrane as a helical span at residues 369 to 389 (MSAVITLVLGALLLLAAWKPP). Residues 390–391 (EM) are Periplasmic-facing. Residues 392–412 (IIWLNLLAFGGLEAVFLWPLV) traverse the membrane as a helical segment. Residues 413 to 423 (LGLYWERANAK) lie on the Cytoplasmic side of the membrane. Residues 424–444 (GALSAMIVGGVLYAVLATLNI) traverse the membrane as a helical segment. A topological domain (periplasmic) is located at residue Gln-445. A helical transmembrane segment spans residues 446 to 466 (YLGFHPIVPSLLLSLLAFLVG). Residues 467 to 483 (NRFGTSVPQATVLTTDK) lie on the Cytoplasmic side of the membrane.

Belongs to the sodium:solute symporter (SSF) (TC 2.A.21) family.

It localises to the cell inner membrane. It carries out the reaction (R)-pantothenate(in) + Na(+)(in) = (R)-pantothenate(out) + Na(+)(out). With respect to regulation, pantothenate uptake is not reduced in osmotically shocked cells or by ATP depletion with arsenate, but is reduced greater than 90% by the dissipation of the membrane electrochemical gradient with 2,4-dinitrophenol. In terms of biological role, catalyzes the sodium-dependent uptake of extracellular pantothenate. The sequence is that of Sodium/pantothenate symporter from Escherichia coli (strain K12).